Reading from the N-terminus, the 375-residue chain is Succinyl-diaminopimelate desuccinylase (375 aa).

Zn(2+) is bound at residue H66. Residue D68 is part of the active site. A Zn(2+)-binding site is contributed by D99. E133 functions as the Proton acceptor in the catalytic mechanism. Positions 134, 162, and 348 each coordinate Zn(2+).

It belongs to the peptidase M20A family. DapE subfamily. Homodimer. Zn(2+) serves as cofactor. The cofactor is Co(2+).

The enzyme catalyses N-succinyl-(2S,6S)-2,6-diaminopimelate + H2O = (2S,6S)-2,6-diaminopimelate + succinate. It functions in the pathway amino-acid biosynthesis; L-lysine biosynthesis via DAP pathway; LL-2,6-diaminopimelate from (S)-tetrahydrodipicolinate (succinylase route): step 3/3. Its function is as follows. Catalyzes the hydrolysis of N-succinyl-L,L-diaminopimelic acid (SDAP), forming succinate and LL-2,6-diaminopimelate (DAP), an intermediate involved in the bacterial biosynthesis of lysine and meso-diaminopimelic acid, an essential component of bacterial cell walls. This is Succinyl-diaminopimelate desuccinylase from Shigella flexneri serotype 5b (strain 8401).